The chain runs to 427 residues: MLDIKWIRENPETLDKALAKRGAAPLSSELIALDEKRREHVGKVQAAQERRNAASKEIGKAMAAKDMGTAEKLKAEVGELKDFLAHAEEDERRLSKELSDALSTIPNIPLDDVPLGKDESDNVELRRIGNPHNFSFQPKEHFELGEALGYMDFERAAKLAGARFTVLKGPLARLERALGQFMLDLHTTEHGYTEVMPPLMVRDEAVYGTGQLPKFSEDLFRTTDGRWLIPTAEVPLTNLVAEEIVDMKGLPLRFTALTPCFRSEAGSAGRDTRGMLRQHQFLKVEMVSITDAESSVAEHERMTACAEEVLKRLGLPFRTVVLCTGDMGFGAQRTYDIEVWLPGQNTYREISSCSTCGDFQGRRMNARYRPEGEKSTRFVHTLNGSGAAVGRALIAVMENYQQEDGSIHIPEALQPYMGGLTRIEKAA.

231-233 (TAE) contacts L-serine. ATP is bound at residue 262–264 (RSE). Glutamate 285 serves as a coordination point for L-serine. 349–352 (EISS) serves as a coordination point for ATP. Serine 385 lines the L-serine pocket.

This sequence belongs to the class-II aminoacyl-tRNA synthetase family. Type-1 seryl-tRNA synthetase subfamily. Homodimer. The tRNA molecule binds across the dimer.

It is found in the cytoplasm. The catalysed reaction is tRNA(Ser) + L-serine + ATP = L-seryl-tRNA(Ser) + AMP + diphosphate + H(+). It catalyses the reaction tRNA(Sec) + L-serine + ATP = L-seryl-tRNA(Sec) + AMP + diphosphate + H(+). Its pathway is aminoacyl-tRNA biosynthesis; selenocysteinyl-tRNA(Sec) biosynthesis; L-seryl-tRNA(Sec) from L-serine and tRNA(Sec): step 1/1. Functionally, catalyzes the attachment of serine to tRNA(Ser). Is also able to aminoacylate tRNA(Sec) with serine, to form the misacylated tRNA L-seryl-tRNA(Sec), which will be further converted into selenocysteinyl-tRNA(Sec). This chain is Serine--tRNA ligase, found in Brucella melitensis biotype 2 (strain ATCC 23457).